Reading from the N-terminus, the 463-residue chain is Glutamate--tRNA ligase (463 aa).

The short motif at 10–20 (PSPTGHLHIGG) is the 'HIGH' region element. A 'KMSKS' region motif is present at residues 236-240 (KLSKR). Lys-239 is a binding site for ATP.

The protein belongs to the class-I aminoacyl-tRNA synthetase family. Glutamate--tRNA ligase type 1 subfamily. Monomer.

The protein localises to the cytoplasm. The catalysed reaction is tRNA(Glu) + L-glutamate + ATP = L-glutamyl-tRNA(Glu) + AMP + diphosphate. Its function is as follows. Catalyzes the attachment of glutamate to tRNA(Glu) in a two-step reaction: glutamate is first activated by ATP to form Glu-AMP and then transferred to the acceptor end of tRNA(Glu). The sequence is that of Glutamate--tRNA ligase from Nitratidesulfovibrio vulgaris (strain ATCC 29579 / DSM 644 / CCUG 34227 / NCIMB 8303 / VKM B-1760 / Hildenborough) (Desulfovibrio vulgaris).